The chain runs to 736 residues: Subtilisin-like protease SBT4.12 (736 aa).

Residues 1–24 (MANLAASTCLYSWLLVLLLSSVSA) form the signal peptide. Positions 25 to 110 (IIDEDTQVYI…VFPNKILQLH (86 aa)) are cleaved as a propeptide — activation peptide. In terms of domain architecture, Inhibitor I9 spans 32-110 (VYIVYMGSLS…VFPNKILQLH (79 aa)). One can recognise a Peptidase S8 domain in the interval 114-580 (SWDFMGVKEG…AGHVDPMAAL (467 aa)). Asp142 (charge relay system) is an active-site residue. Asn173 carries N-linked (GlcNAc...) asparagine glycosylation. His197 acts as the Charge relay system in catalysis. N-linked (GlcNAc...) asparagine glycans are attached at residues Asn220, Asn381, and Asn459. Positions 353-437 (KYPLVYGKSA…GLKAKDFKSL (85 aa)) constitute a PA domain. Ser519 serves as the catalytic Charge relay system. Asn601, Asn649, and Asn659 each carry an N-linked (GlcNAc...) asparagine glycan.

Belongs to the peptidase S8 family. In terms of processing, the C-terminal propeptide is autocleaved. Specifically expressed in root stele of the root hair zone.

It is found in the secreted. The sequence is that of Subtilisin-like protease SBT4.12 from Arabidopsis thaliana (Mouse-ear cress).